The sequence spans 564 residues: Pyruvate decarboxylase (564 aa).

Residues D28 and H115 each contribute to the pyruvate site. Residues T390 and 413 to 415 (GSI) contribute to the thiamine diphosphate site. D444 contributes to the Mg(2+) binding site. Thiamine diphosphate is bound by residues 445–446 (GS) and 471–476 (NDGYTI). Mg(2+)-binding residues include N471 and G473. E477 is a binding site for pyruvate.

This sequence belongs to the TPP enzyme family. In terms of assembly, homotetramer. It depends on Mg(2+) as a cofactor. Thiamine diphosphate is required as a cofactor.

It catalyses the reaction a 2-oxocarboxylate + H(+) = an aldehyde + CO2. It carries out the reaction pyruvate + H(+) = acetaldehyde + CO2. The protein is Pyruvate decarboxylase (PDC1) of Kluyveromyces marxianus (Yeast).